A 280-amino-acid polypeptide reads, in one-letter code: Putative pyruvate, phosphate dikinase regulatory protein (280 aa).

152–159 (GISRTSKT) is an ADP binding site.

It belongs to the pyruvate, phosphate/water dikinase regulatory protein family. PDRP subfamily.

It catalyses the reaction N(tele)-phospho-L-histidyl/L-threonyl-[pyruvate, phosphate dikinase] + ADP = N(tele)-phospho-L-histidyl/O-phospho-L-threonyl-[pyruvate, phosphate dikinase] + AMP + H(+). The catalysed reaction is N(tele)-phospho-L-histidyl/O-phospho-L-threonyl-[pyruvate, phosphate dikinase] + phosphate + H(+) = N(tele)-phospho-L-histidyl/L-threonyl-[pyruvate, phosphate dikinase] + diphosphate. Bifunctional serine/threonine kinase and phosphorylase involved in the regulation of the pyruvate, phosphate dikinase (PPDK) by catalyzing its phosphorylation/dephosphorylation. The protein is Putative pyruvate, phosphate dikinase regulatory protein of Clostridioides difficile (strain 630) (Peptoclostridium difficile).